We begin with the raw amino-acid sequence, 331 residues long: LIM/homeobox protein Lhx9 (331 aa).

2 LIM zinc-binding domains span residues 71-132 and 133-194; these read TLCA…FSVK and RCAR…LVQG. The interval 253–275 is disordered; the sequence is ETDLDRDQTYPPSQKTKRMRTSF. Residues 268 to 327 constitute a DNA-binding region (homeobox); sequence TKRMRTSFKHHQLRTMKSYFAINHNPDAKDLKQLAQKTGLTKRVLQGEQCSGFNSHTTRR.

The protein resides in the nucleus. In terms of biological role, may be involved in gonadal development. The protein is LIM/homeobox protein Lhx9 (lhx9) of Xenopus laevis (African clawed frog).